A 51-amino-acid polypeptide reads, in one-letter code: Large ribosomal subunit protein eL39 (51 aa).

The protein belongs to the eukaryotic ribosomal protein eL39 family. As to quaternary structure, part of the 50S ribosomal subunit.

This Pyrococcus furiosus (strain ATCC 43587 / DSM 3638 / JCM 8422 / Vc1) protein is Large ribosomal subunit protein eL39.